Consider the following 89-residue polypeptide: Small ribosomal subunit protein uS19 (89 aa).

This sequence belongs to the universal ribosomal protein uS19 family.

Functionally, protein S19 forms a complex with S13 that binds strongly to the 16S ribosomal RNA. This Porphyromonas gingivalis (strain ATCC 33277 / DSM 20709 / CIP 103683 / JCM 12257 / NCTC 11834 / 2561) protein is Small ribosomal subunit protein uS19.